The sequence spans 147 residues: Lysozyme C (147 aa).

The first 18 residues, 1–18 (MRSLLILVLCFLPLAALG), serve as a signal peptide directing secretion. One can recognise a C-type lysozyme domain in the interval 19–147 (KVFGRCELAA…VQAWIRGCRL (129 aa)). Disulfide bonds link cysteine 24-cysteine 145, cysteine 48-cysteine 133, cysteine 82-cysteine 98, and cysteine 94-cysteine 112. Residues glutamate 53 and aspartate 70 contribute to the active site. Residue aspartate 119 coordinates substrate.

This sequence belongs to the glycosyl hydrolase 22 family. As to quaternary structure, monomer. In the egg white and polymorphonuclear leukocytes.

It localises to the secreted. The enzyme catalyses Hydrolysis of (1-&gt;4)-beta-linkages between N-acetylmuramic acid and N-acetyl-D-glucosamine residues in a peptidoglycan and between N-acetyl-D-glucosamine residues in chitodextrins.. Functionally, lysozymes have primarily a bacteriolytic function; those in tissues and body fluids are associated with the monocyte-macrophage system and enhance the activity of immunoagents. Has bacteriolytic activity against M.luteus. The polypeptide is Lysozyme C (LYZ) (Gallus gallus (Chicken)).